The primary structure comprises 312 residues: Sulfate adenylyltransferase subunit 2 (312 aa).

It belongs to the PAPS reductase family. CysD subfamily. In terms of assembly, heterodimer composed of CysD, the smaller subunit, and CysN.

The catalysed reaction is sulfate + ATP + H(+) = adenosine 5'-phosphosulfate + diphosphate. The protein operates within sulfur metabolism; hydrogen sulfide biosynthesis; sulfite from sulfate: step 1/3. Its function is as follows. With CysN forms the ATP sulfurylase (ATPS) that catalyzes the adenylation of sulfate producing adenosine 5'-phosphosulfate (APS) and diphosphate, the first enzymatic step in sulfur assimilation pathway. APS synthesis involves the formation of a high-energy phosphoric-sulfuric acid anhydride bond driven by GTP hydrolysis by CysN coupled to ATP hydrolysis by CysD. The protein is Sulfate adenylyltransferase subunit 2 of Methylobacterium nodulans (strain LMG 21967 / CNCM I-2342 / ORS 2060).